A 434-amino-acid chain; its full sequence is Enolase (434 aa).

A disordered region spans residues 29–56 (SGHTGRAAVPSGASTGSREALEMRDGDK). Residues 47 to 56 (EALEMRDGDK) show a composition bias toward basic and acidic residues. Q163 is a binding site for (2R)-2-phosphoglycerate. Residue E205 is the Proton donor of the active site. Mg(2+) contacts are provided by D242, E285, and D312. The (2R)-2-phosphoglycerate site is built by K337, R366, S367, and K388. The active-site Proton acceptor is the K337.

This sequence belongs to the enolase family. As to quaternary structure, homooctamer. It depends on Mg(2+) as a cofactor.

It is found in the cytoplasm. The protein resides in the secreted. The protein localises to the cell surface. It carries out the reaction (2R)-2-phosphoglycerate = phosphoenolpyruvate + H2O. Its pathway is carbohydrate degradation; glycolysis; pyruvate from D-glyceraldehyde 3-phosphate: step 4/5. In terms of biological role, catalyzes the reversible conversion of 2-phosphoglycerate (2-PG) into phosphoenolpyruvate (PEP). It is essential for the degradation of carbohydrates via glycolysis. The chain is Enolase from Nitratidesulfovibrio vulgaris (strain DSM 19637 / Miyazaki F) (Desulfovibrio vulgaris).